A 199-amino-acid polypeptide reads, in one-letter code: Peptidyl-tRNA hydrolase (199 aa).

Tyr-15 lines the tRNA pocket. His-20 acts as the Proton acceptor in catalysis. Residues Tyr-66, Asn-68, and Asn-114 each coordinate tRNA.

This sequence belongs to the PTH family. In terms of assembly, monomer.

The protein resides in the cytoplasm. The enzyme catalyses an N-acyl-L-alpha-aminoacyl-tRNA + H2O = an N-acyl-L-amino acid + a tRNA + H(+). Functionally, hydrolyzes ribosome-free peptidyl-tRNAs (with 1 or more amino acids incorporated), which drop off the ribosome during protein synthesis, or as a result of ribosome stalling. Catalyzes the release of premature peptidyl moieties from peptidyl-tRNA molecules trapped in stalled 50S ribosomal subunits, and thus maintains levels of free tRNAs and 50S ribosomes. The chain is Peptidyl-tRNA hydrolase from Burkholderia cenocepacia (strain ATCC BAA-245 / DSM 16553 / LMG 16656 / NCTC 13227 / J2315 / CF5610) (Burkholderia cepacia (strain J2315)).